A 542-amino-acid chain; its full sequence is MAKTIAYDEEARRGLERGLNSLADAVKVTLGPKGRNVVLEKKWGAPTITNDGVSIAKEIELEDPYEKIGAELVKEVAKKTDDVAGDGTTTATVLAQALVREGLRNVAAGANPLGRKRGIEKAVEAVTAKLLDTAKEVETKEQIAATAGISAGDAAIGELIAEAMDKVGKEGVITVEESNTFGLQLELTEGMRFDKGYISGYFATDPERQEAVLEDPYILLVGSKVSTVKDLLPLLEKVIQAGKPLLIIAEDVEGEALSTLVVKKILGTFKSVAVKAPGGGDRRKAQLADIAILTGGQVISEEVGLSLETAGIELLGQARKVVVTKDETTIVEGAGDAEAIAGRVSQIRAEIENSDSDYDREKLQERLAKLAGGVAVIKAGAATEVELKERKHRIEDAVRNAKAAVEEGIVAGGGVAFLQSVPALDDFKLEGDEATGANIVRVALSAPLKQIAFNAGLEPGVLAEKVSNLPAGQGLNAQTNEDEDLLAAGVADPVKVTRSALQNAASIAALFLTTEAVVADKPEKASAAPATGHRFKMGGMDF.

ATP is bound by residues 29 to 32, 86 to 90, Gly-413, and Asp-492; these read TLGP and DGTTT.

This sequence belongs to the chaperonin (HSP60) family. Forms a cylinder of 14 subunits composed of two heptameric rings stacked back-to-back. Interacts with the co-chaperonin GroES.

The protein localises to the cytoplasm. The enzyme catalyses ATP + H2O + a folded polypeptide = ADP + phosphate + an unfolded polypeptide.. Functionally, together with its co-chaperonin GroES, plays an essential role in assisting protein folding. The GroEL-GroES system forms a nano-cage that allows encapsulation of the non-native substrate proteins and provides a physical environment optimized to promote and accelerate protein folding. The polypeptide is Chaperonin GroEL (Nocardia asteroides).